A 212-amino-acid polypeptide reads, in one-letter code: Imidazole glycerol phosphate synthase subunit HisH (212 aa).

Residues Arg3–Thr208 enclose the Glutamine amidotransferase type-1 domain. Catalysis depends on Cys81, which acts as the Nucleophile. Residues His183 and Glu185 contribute to the active site.

As to quaternary structure, heterodimer of HisH and HisF.

It localises to the cytoplasm. It carries out the reaction 5-[(5-phospho-1-deoxy-D-ribulos-1-ylimino)methylamino]-1-(5-phospho-beta-D-ribosyl)imidazole-4-carboxamide + L-glutamine = D-erythro-1-(imidazol-4-yl)glycerol 3-phosphate + 5-amino-1-(5-phospho-beta-D-ribosyl)imidazole-4-carboxamide + L-glutamate + H(+). It catalyses the reaction L-glutamine + H2O = L-glutamate + NH4(+). Its pathway is amino-acid biosynthesis; L-histidine biosynthesis; L-histidine from 5-phospho-alpha-D-ribose 1-diphosphate: step 5/9. Its function is as follows. IGPS catalyzes the conversion of PRFAR and glutamine to IGP, AICAR and glutamate. The HisH subunit catalyzes the hydrolysis of glutamine to glutamate and ammonia as part of the synthesis of IGP and AICAR. The resulting ammonia molecule is channeled to the active site of HisF. The polypeptide is Imidazole glycerol phosphate synthase subunit HisH (Symbiobacterium thermophilum (strain DSM 24528 / JCM 14929 / IAM 14863 / T)).